The primary structure comprises 586 residues: UvrABC system protein C (586 aa).

The 78-residue stretch at 17 to 94 (HKPGCYLWKD…IKQYKPRFNL (78 aa)) folds into the GIY-YIG domain. The UVR domain occupies 201–236 (EQVLNHLQQQEIKASEQQNFEAARHFLDLQKAVLEL).

It belongs to the UvrC family. In terms of assembly, interacts with UvrB in an incision complex.

It is found in the cytoplasm. Its function is as follows. The UvrABC repair system catalyzes the recognition and processing of DNA lesions. UvrC both incises the 5' and 3' sides of the lesion. The N-terminal half is responsible for the 3' incision and the C-terminal half is responsible for the 5' incision. This Mycoplasma pneumoniae (strain ATCC 29342 / M129 / Subtype 1) (Mycoplasmoides pneumoniae) protein is UvrABC system protein C.